A 66-amino-acid polypeptide reads, in one-letter code: Antitoxin RelB2 (66 aa).

Its function is as follows. Antitoxin component of a type II toxin-antitoxin (TA) system. Neutralizes the effect of cognate toxin RelE2, but no other RelE or ParE toxin. This is Antitoxin RelB2 (relB2) from Caulobacter vibrioides (strain ATCC 19089 / CIP 103742 / CB 15) (Caulobacter crescentus).